The primary structure comprises 901 residues: HTH-type transcriptional regulator MalT (901 aa).

Residue 39 to 46 coordinates ATP; it reads SPAGYGKT. The 66-residue stretch at 829 to 894 folds into the HTH luxR-type domain; the sequence is ELIRTSPLTQ…DAVQHAQQLL (66 aa). The segment at residues 853–872 is a DNA-binding region (H-T-H motif); it reads NEQIAGELAVAATTIKTHIR.

The protein belongs to the MalT family. Monomer in solution. Oligomerizes to an active state in the presence of the positive effectors ATP and maltotriose.

With respect to regulation, activated by ATP and maltotriose, which are both required for DNA binding. Its function is as follows. Positively regulates the transcription of the maltose regulon whose gene products are responsible for uptake and catabolism of malto-oligosaccharides. Specifically binds to the promoter region of its target genes, recognizing a short DNA motif called the MalT box. This Salmonella choleraesuis (strain SC-B67) protein is HTH-type transcriptional regulator MalT.